The sequence spans 52 residues: Venom peptide 4a (52 aa).

The N-terminal stretch at 1–23 is a signal peptide; sequence MRSAILLVIVAIVAILGFLGVNA. 3 AXPX repeats span residues 23-26, 31-34, and 39-42; these read AEPL, AEPN, and AAPL. The propeptide occupies 24-41; sequence EPLPSPLAEPNPHAKAAP. Ala51 bears the Alanine amide mark.

In terms of tissue distribution, expressed by the venom gland.

It localises to the secreted. In Eumenes pomiformis (Potter wasp), this protein is Venom peptide 4a.